Here is a 58-residue protein sequence, read N- to C-terminus: uncharacterized protein (58 aa).

A helical transmembrane segment spans residues 12-32 (VALVYISVYFFSCISLIVYFF).

It is found in the membrane. This is an uncharacterized protein from Saccharomyces cerevisiae (strain ATCC 204508 / S288c) (Baker's yeast).